A 601-amino-acid chain; its full sequence is Elongation factor 4 (601 aa).

The tr-type G domain maps to 4 to 186 (SFIRNFAIIA…SIVHLVPPPK (183 aa)). GTP contacts are provided by residues 16–21 (DHGKST) and 133–136 (NKID).

The protein belongs to the TRAFAC class translation factor GTPase superfamily. Classic translation factor GTPase family. LepA subfamily.

The protein localises to the cell inner membrane. The catalysed reaction is GTP + H2O = GDP + phosphate + H(+). Its function is as follows. Required for accurate and efficient protein synthesis under certain stress conditions. May act as a fidelity factor of the translation reaction, by catalyzing a one-codon backward translocation of tRNAs on improperly translocated ribosomes. Back-translocation proceeds from a post-translocation (POST) complex to a pre-translocation (PRE) complex, thus giving elongation factor G a second chance to translocate the tRNAs correctly. Binds to ribosomes in a GTP-dependent manner. The sequence is that of Elongation factor 4 from Koribacter versatilis (strain Ellin345).